A 428-amino-acid chain; its full sequence is MLDPKFLRNELEVTAERLATRGFILDIAHLTQLEEKRKSLQVATEELQASRNAISKSIGQAKARGEDVDAIMAQVGDLGSQLDAKKIELAAVLEEVNAIAMSMPNLPDESAPIGADETENVEVRRWGTPRTFDFPIKDHIDLGEGLNGLDFKNAVKITGSRFIVMKGQVARLNRAIGQFMLDLHTTEHGYTEAYVPLLVNEASLLGTGQLPKFGEDLFHTKPATEEGQGLSLIPTAEVPLTNLVRDSIVDEDELPIKLTAHTACFRSEAGSYGKDTRGLIRQHQFDKVEMVQIVKPEDSMAALEALTGHAETVLQRLGLPYRTVILCTGDMGFGSSKTYDIEVWLPAQNTYREISSCSNMKDFQARRMQARYRVKADNKPALLHTLNGSGLAVGRTLVAILENYQNADGSITIPEVLRPYMGGLTKIG.

235-237 (TAE) lines the L-serine pocket. 266 to 268 (RSE) serves as a coordination point for ATP. Position 289 (glutamate 289) interacts with L-serine. 353 to 356 (EISS) contributes to the ATP binding site. L-serine is bound at residue serine 389.

This sequence belongs to the class-II aminoacyl-tRNA synthetase family. Type-1 seryl-tRNA synthetase subfamily. In terms of assembly, homodimer. The tRNA molecule binds across the dimer.

It localises to the cytoplasm. It carries out the reaction tRNA(Ser) + L-serine + ATP = L-seryl-tRNA(Ser) + AMP + diphosphate + H(+). The enzyme catalyses tRNA(Sec) + L-serine + ATP = L-seryl-tRNA(Sec) + AMP + diphosphate + H(+). Its pathway is aminoacyl-tRNA biosynthesis; selenocysteinyl-tRNA(Sec) biosynthesis; L-seryl-tRNA(Sec) from L-serine and tRNA(Sec): step 1/1. Catalyzes the attachment of serine to tRNA(Ser). Is also able to aminoacylate tRNA(Sec) with serine, to form the misacylated tRNA L-seryl-tRNA(Sec), which will be further converted into selenocysteinyl-tRNA(Sec). In Shewanella baltica (strain OS155 / ATCC BAA-1091), this protein is Serine--tRNA ligase.